The following is an 809-amino-acid chain: Ubiquitin carboxyl-terminal hydrolase 1 (809 aa).

In terms of domain architecture, USP spans 101–738 (AGLVNDGNTC…GVFMLFYEYD (638 aa)). Residue cysteine 110 is the Nucleophile of the active site. Residues 143–195 (NEHNEEGNGQESAQDEATHKKNTRKGGKVYGKHKKKLNRKSSSKEDEEKSQEP) form a disordered region. The span at 162–183 (KKNTRKGGKVYGKHKKKLNRKS) shows a compositional bias: basic residues. Basic and acidic residues predominate over residues 184 to 194 (SSKEDEEKSQE). 3 positions are modified to phosphoserine: serine 530, serine 531, and serine 555. The interval 569 to 596 (ASHYNHTKDISNYDPLNGEVDGVTSDDE) is disordered. Phosphoserine is present on residues serine 618 and serine 638. Threonine 652 carries the phosphothreonine modification. 3 positions are modified to phosphoserine: serine 653, serine 654, and serine 670. Histidine 697 acts as the Proton acceptor in catalysis. The segment at 750-809 (LEAIQSNNEEDDEKEQEQKGVQEPKESQEQGEGEEQEEGQEQMKFERTEDHRDISGKDVN) is disordered. Serine 755 carries the post-translational modification Phosphoserine. The span at 765 to 777 (QEQKGVQEPKESQ) shows a compositional bias: basic and acidic residues. A compositionally biased stretch (acidic residues) spans 778–789 (EQGEGEEQEEGQ). Residues 790–809 (EQMKFERTEDHRDISGKDVN) are compositionally biased toward basic and acidic residues.

This sequence belongs to the peptidase C19 family.

The catalysed reaction is Thiol-dependent hydrolysis of ester, thioester, amide, peptide and isopeptide bonds formed by the C-terminal Gly of ubiquitin (a 76-residue protein attached to proteins as an intracellular targeting signal).. Its function is as follows. Has an ATP-independent isopeptidase activity, cleaving at the C-terminus of the ubiquitin moiety in natural or engineered linear fusion proteins, irrespective of their size or the presence of an N-terminal extension to ubiquitin. The chain is Ubiquitin carboxyl-terminal hydrolase 1 (UBP1) from Saccharomyces cerevisiae (strain ATCC 204508 / S288c) (Baker's yeast).